We begin with the raw amino-acid sequence, 334 residues long: Probable fructose-bisphosphate aldolase class 1 (334 aa).

This sequence belongs to the class I fructose-bisphosphate aldolase family.

It catalyses the reaction beta-D-fructose 1,6-bisphosphate = D-glyceraldehyde 3-phosphate + dihydroxyacetone phosphate. The protein operates within carbohydrate degradation; glycolysis; D-glyceraldehyde 3-phosphate and glycerone phosphate from D-glucose: step 4/4. This chain is Probable fructose-bisphosphate aldolase class 1, found in Xanthomonas axonopodis pv. citri (strain 306).